Here is a 524-residue protein sequence, read N- to C-terminus: Butyrophilin subfamily 1 member A1 (524 aa).

Residues 1–26 (MAVPTNSCLLVCLLTLTVLQLPTLDS) form the signal peptide. Over 27–247 (AAPFDVTAPQ…APFVPRLTPW (221 aa)) the chain is Extracellular. 2 consecutive Ig-like V-type domains span residues 29–141 (PFDV…VYLK) and 149–235 (PQIS…VEIS). 2 cysteine pairs are disulfide-bonded: Cys51–Cys125 and Cys165–Cys219. N-linked (GlcNAc...) asparagine glycans are attached at residues Asn56 and Asn216. Residues 248 to 268 (IVAVAIILLALGFLTIGSIFF) form a helical membrane-spanning segment. At 269 to 524 (TWKLYKERSS…IPFSPSQAAP (256 aa)) the chain is on the cytoplasmic side. A B30.2/SPRY domain is found at 286-480 (SKERLLEELR…LTICSTANGP (195 aa)).

It belongs to the immunoglobulin superfamily. BTN/MOG family. As to quaternary structure, seems to associate with xanthine dehydrogenase/oxidase. Post-translationally, N-glycosylated. In terms of tissue distribution, strongly expressed in lactating mammary tissue (at protein level). About 100-fold lower levels in virgin mammary tissue. Also detected in spleen and thymus at 10-20 times lower levels compared to those detected in virgin mammary gland. Very low levels in several other tissues, including brain, heart, kidney, lymph node, lung and small intestine. In the thymus, detected in the stroma, in epithelial cells (at protein level). Most prominent in medullary areas of the thymus and at the corticomedullary junction (at protein level).

Its subcellular location is the membrane. Its function is as follows. May function in the secretion of milk-fat droplets. May act as a specific membrane-associated receptor for the association of cytoplasmic droplets with the apical plasma membrane. Inhibits the proliferation of CD4 and CD8 T-cells activated by anti-CD3 antibodies, T-cell metabolism and IL2 and IFNG secretion. The polypeptide is Butyrophilin subfamily 1 member A1 (Btn1a1) (Mus musculus (Mouse)).